Reading from the N-terminus, the 145-residue chain is D-aminoacyl-tRNA deacylase (145 aa).

The short motif at 137–138 (GP) is the Gly-cisPro motif, important for rejection of L-amino acids element.

It belongs to the DTD family. As to quaternary structure, homodimer.

It is found in the cytoplasm. The enzyme catalyses glycyl-tRNA(Ala) + H2O = tRNA(Ala) + glycine + H(+). It carries out the reaction a D-aminoacyl-tRNA + H2O = a tRNA + a D-alpha-amino acid + H(+). Functionally, an aminoacyl-tRNA editing enzyme that deacylates mischarged D-aminoacyl-tRNAs. Also deacylates mischarged glycyl-tRNA(Ala), protecting cells against glycine mischarging by AlaRS. Acts via tRNA-based rather than protein-based catalysis; rejects L-amino acids rather than detecting D-amino acids in the active site. By recycling D-aminoacyl-tRNA to D-amino acids and free tRNA molecules, this enzyme counteracts the toxicity associated with the formation of D-aminoacyl-tRNA entities in vivo and helps enforce protein L-homochirality. The chain is D-aminoacyl-tRNA deacylase from Pectobacterium atrosepticum (strain SCRI 1043 / ATCC BAA-672) (Erwinia carotovora subsp. atroseptica).